Consider the following 216-residue polypeptide: U1 small nuclear ribonucleoprotein A (216 aa).

RRM domains are found at residues 7–86 and 142–216; these read QTIY…YSKS and QILF…FAKK. The disordered stretch occupies residues 97–142; sequence TFKERPKKVKPPKPAPGTDEKKDKKKKPSSAENSNPNAQTEQPPNQ. Positions 126 to 142 are enriched in polar residues; the sequence is SAENSNPNAQTEQPPNQ.

It belongs to the RRM U1 A/B'' family. As to quaternary structure, belongs to the spliceosome where it is associated with snRNP U1. Interacts with the SMN complex.

It is found in the nucleus. In terms of biological role, binds stem loop II of U1 snRNA. It is the first snRNP to interact with pre-mRNA. This interaction is required for the subsequent binding of U2 snRNP and the U4/U6/U5 tri-snRNP. Plays a role in regulating sex-lethal splicing. This Drosophila melanogaster (Fruit fly) protein is U1 small nuclear ribonucleoprotein A (snf).